The sequence spans 549 residues: Sphingosine-1-phosphate transporter SPNS2 (549 aa).

Disordered regions lie at residues 14–36 and 78–97; these read AEEE…GAGG and PGCA…PASL. 11 helical membrane-spanning segments follow: residues 141 to 161, 169 to 189, 202 to 222, 229 to 249, 261 to 281, 320 to 340, 364 to 384, 398 to 418, 422 to 442, 466 to 486, and 507 to 527; these read GLLQ…FGYL, VILS…SFIP, LVGI…GDLF, LMLS…YITG, WALR…LILV, LATS…PLYL, LIFG…GAGA, LVCA…FVAA, IVGA…NWAI, TSHL…SDLI, and LCPF…LFFL.

It belongs to the major facilitator superfamily. Spinster (TC 2.A.1.49) family. Expression is high in the lungs and liver, low in the lymph nodes, spleen and bone marrow, and very low but detectable in the thymus. Not expressed in red blood cells. Also expressed in the inner ear: expressed in the cochlea, both in the lateral wall and organ of Corti.

Its subcellular location is the cell membrane. It localises to the endosome membrane. It catalyses the reaction sphing-4-enine 1-phosphate(in) = sphing-4-enine 1-phosphate(out). It carries out the reaction sphinganine 1-phosphate(in) = sphinganine 1-phosphate(out). Lipid transporter that specifically mediates export of sphingosine-1-phosphate (sphing-4-enine 1-phosphate, S1P) and sphinganine-1-phosphate in the lymph, thereby playing a role in lymphocyte trafficking. S1P is a bioactive signaling molecule that regulates many physiological processes important for the development and for the immune system. Regulates levels of S1P and the S1P gradient that exists between the high circulating concentrations of S1P and low tissue levels that control lymphocyte trafficking. Required for the egress of T-cells from lymph nodes during an immune response by mediating S1P secretion, which generates a gradient that enables activated T-cells to access lymph. Also required for the egress of immature B-cells from the bone marrow. In contrast, it does not mediate S1P release from red blood cells. Involved in auditory function: S1P release in the inner ear is required for maintenance of the endocochlear potential in the cochlea. In addition to export, also able to mediate S1P import. The chain is Sphingosine-1-phosphate transporter SPNS2 from Mus musculus (Mouse).